Reading from the N-terminus, the 360-residue chain is Phospho-N-acetylmuramoyl-pentapeptide-transferase (360 aa).

The next 10 membrane-spanning stretches (helical) occupy residues 21–41, 74–94, 97–117, 135–155, 168–188, 199–219, 236–256, 263–283, 288–308, and 338–358; these read YVTF…LWWG, MGGI…GDLA, YVWV…IDDY, ILQS…ADLV, IMPQ…VGSS, GLAI…AYLS, AGEL…FLWF, VFMG…IAVL, ILLV…ILQV, and VIVR…ATLK.

This sequence belongs to the glycosyltransferase 4 family. MraY subfamily. Mg(2+) is required as a cofactor.

Its subcellular location is the cell inner membrane. The enzyme catalyses UDP-N-acetyl-alpha-D-muramoyl-L-alanyl-gamma-D-glutamyl-meso-2,6-diaminopimeloyl-D-alanyl-D-alanine + di-trans,octa-cis-undecaprenyl phosphate = di-trans,octa-cis-undecaprenyl diphospho-N-acetyl-alpha-D-muramoyl-L-alanyl-D-glutamyl-meso-2,6-diaminopimeloyl-D-alanyl-D-alanine + UMP. The protein operates within cell wall biogenesis; peptidoglycan biosynthesis. Catalyzes the initial step of the lipid cycle reactions in the biosynthesis of the cell wall peptidoglycan: transfers peptidoglycan precursor phospho-MurNAc-pentapeptide from UDP-MurNAc-pentapeptide onto the lipid carrier undecaprenyl phosphate, yielding undecaprenyl-pyrophosphoryl-MurNAc-pentapeptide, known as lipid I. In Shewanella sediminis (strain HAW-EB3), this protein is Phospho-N-acetylmuramoyl-pentapeptide-transferase.